We begin with the raw amino-acid sequence, 116 residues long: Large ribosomal subunit protein bL20c (116 aa).

This sequence belongs to the bacterial ribosomal protein bL20 family.

The protein resides in the plastid. It localises to the chloroplast. In terms of biological role, binds directly to 23S ribosomal RNA and is necessary for the in vitro assembly process of the 50S ribosomal subunit. It is not involved in the protein synthesizing functions of that subunit. This Ipomoea purpurea (Common morning glory) protein is Large ribosomal subunit protein bL20c.